Here is a 329-residue protein sequence, read N- to C-terminus: Flotillin-like protein FloA (329 aa).

2 helical membrane passes run 5-25 and 27-47; these read IFLLVVIGLIFVFLSVILSFI and LGLWISALAAGVKIGIFTLVG.

Belongs to the flotillin-like FloA family. As to quaternary structure, homooligomerizes.

It localises to the cell membrane. Its subcellular location is the membrane raft. Functionally, found in functional membrane microdomains (FMM) that may be equivalent to eukaryotic membrane rafts. FMMs are highly dynamic and increase in number as cells age. Flotillins are thought to be important factors in membrane fluidity. This Thermoanaerobacter sp. (strain X514) protein is Flotillin-like protein FloA.